The primary structure comprises 369 residues: Virion membrane protein A16 homolog (369 aa).

Glycine 2 is lipidated: N-myristoyl glycine; by host. The Virion surface portion of the chain corresponds to 2–330; that stretch reads GQHVSNITVI…SYNKEAKLPS (329 aa). A helical transmembrane segment spans residues 331–351; sequence FFSIIPVCIVLLCLFVLFYFL. At 352–369 the chain is on the intravirion side; it reads RIYDAKVINSNTINVYRK.

Belongs to the poxviridae A16/G9/J5 family. In terms of assembly, part of a stable entry-fusion complex (EFC) which is at least composed of proteins A16, A21, A28, G3, G9, H2, J5, and L5. Formation of the viral membrane is necessary for the assembly of the complex. Interacts with G9. Most cysteines are linked by disulfide bonds. They are created by the viral disulfide bond formation pathway, a poxvirus-specific redox pathway that operates on the cytoplasmic side of the MV membranes.

The protein localises to the virion membrane. Its function is as follows. Envelope protein part of the entry-fusion complex responsible for the virus membrane fusion with host cell membrane during virus entry. Also plays a role in cell-cell fusion (syncytium formation). The sequence is that of Virion membrane protein A16 homolog from Fowlpox virus (strain NVSL) (FPV).